The chain runs to 70 residues: ATP synthase subunit c (70 aa).

A run of 2 helical transmembrane segments spans residues 3-23 and 44-64; these read ALAA…IGIA and LFLI…VIAF.

Belongs to the ATPase C chain family. In terms of assembly, F-type ATPases have 2 components, F(1) - the catalytic core - and F(0) - the membrane proton channel. F(1) has five subunits: alpha(3), beta(3), gamma(1), delta(1), epsilon(1). F(0) has three main subunits: a(1), b(2) and c(10-14). The alpha and beta chains form an alternating ring which encloses part of the gamma chain. F(1) is attached to F(0) by a central stalk formed by the gamma and epsilon chains, while a peripheral stalk is formed by the delta and b chains.

It localises to the cell membrane. In terms of biological role, f(1)F(0) ATP synthase produces ATP from ADP in the presence of a proton or sodium gradient. F-type ATPases consist of two structural domains, F(1) containing the extramembraneous catalytic core and F(0) containing the membrane proton channel, linked together by a central stalk and a peripheral stalk. During catalysis, ATP synthesis in the catalytic domain of F(1) is coupled via a rotary mechanism of the central stalk subunits to proton translocation. Its function is as follows. Key component of the F(0) channel; it plays a direct role in translocation across the membrane. A homomeric c-ring of between 10-14 subunits forms the central stalk rotor element with the F(1) delta and epsilon subunits. The chain is ATP synthase subunit c from Caldicellulosiruptor bescii (strain ATCC BAA-1888 / DSM 6725 / KCTC 15123 / Z-1320) (Anaerocellum thermophilum).